The primary structure comprises 1218 residues: MRSPRTRGRSGRPLSLLLALLCALRAKVCGASGQFELEILSMQNVNGELQNGNCCGGARNPGDRKCTRDECDTYFKVCLKEYQSRVTAGGPCSFGSGSTPVIGGNTFNLKASRGNDRNRIVLPFSFAWPRSYTLLVEAWDSSNDTVQPDSIIEKASHSGMINPSRQWQTLKQNTGVAHFEYQIRVTCDDYYYGFGCNKFCRPRDDFFGHYACDQNGNKTCMEGWMGPECNRAICRQGCSPKHGSCKLPGDCRCQYGWQGLYCDKCIPHPGCVHGICNEPWQCLCETNWGGQLCDKDLNYCGTHQPCLNGGTCSNTGPDKYQCSCPEGYSGPNCEIAEHACLSDPCHNRGSCKETSLGFECECSPGWTGPTCSTNIDDCSPNNCSHGGTCQDLVNGFKCVCPPQWTGKTCQLDANECEAKPCVNAKSCKNLIASYYCDCLPGWMGQNCDININDCLGQCQNDASCRDLVNGYRCICPPGYAGDHCERDIDECASNPCLNGGHCQNEINRFQCLCPTGFSGNLCQLDIDYCEPNPCQNGAQCYNRASDYFCKCPEDYEGKNCSHLKDHCRTTPCEVIDSCTVAMASNDTPEGVRYISSNVCGPHGKCKSQSGGKFTCDCNKGFTGTYCHENINDCESNPCRNGGTCIDGVNSYKCICSDGWEGAYCETNINDCSQNPCHNGGTCRDLVNDFYCDCKNGWKGKTCHSRDSQCDEATCNNGGTCYDEGDAFKCMCPGGWEGTTCNIARNSSCLPNPCHNGGTCVVNGESFTCVCKEGWEGPICAQNTNDCSPHPCYNSGTCVDGDNWYRCECAPGFAGPDCRININECQSSPCAFGATCVDEINGYRCVCPPGHSGAKCQEVSGRPCITMGSVIPDGAKWDDDCNTCQCLNGRIACSKVWCGPRPCLLHKGHSECPSGQSCIPILDDQCFVHPCTGVGECRSSSLQPVKTKCTSDSYYQDNCANITFTFNKEMMSPGLTTEHICSELRNLNILKNVSAEYSIYIACEPSPSANNEIHVAISAEDIRDDGNPIKEITDKIIDLVSKRDGNSSLIAAVAEVRVQRRPLKNRTDFLVPLLSSVLTVAWICCLVTAFYWCLRKRRKPGSHTHSASEDNTTNNVREQLNQIKNPIEKHGANTVPIKDYENKNSKMSKIRTHNSEVEEDDMDKHQQKARFAKQPAYTLVDREEKPPNGTPTKHPNWTNKQDNRDLESAQSLNRMEYIV.

The first 33 residues, 1–33 (MRSPRTRGRSGRPLSLLLALLCALRAKVCGASG), serve as a signal peptide directing secretion. The Extracellular portion of the chain corresponds to 34-1067 (QFELEILSMQ…QRRPLKNRTD (1034 aa)). The N-linked (GlcNAc...) asparagine glycan is linked to asparagine 143. Residues 185-229 (VTCDDYYYGFGCNKFCRPRDDFFGHYACDQNGNKTCMEGWMGPEC) enclose the DSL domain. Cystine bridges form between cysteine 187-cysteine 196 and cysteine 200-cysteine 212. The interval 199–207 (FCRPRDDFF) is important for interaction with NOTCH1. The N-linked (GlcNAc...) asparagine glycan is linked to asparagine 217. Disulfide bonds link cysteine 220–cysteine 229, cysteine 234–cysteine 245, cysteine 238–cysteine 251, cysteine 253–cysteine 262, cysteine 265–cysteine 276, cysteine 271–cysteine 282, cysteine 284–cysteine 293, cysteine 300–cysteine 312, cysteine 306–cysteine 322, cysteine 324–cysteine 333, cysteine 340–cysteine 351, cysteine 345–cysteine 360, cysteine 362–cysteine 371, cysteine 378–cysteine 389, cysteine 383–cysteine 398, cysteine 400–cysteine 409, cysteine 416–cysteine 427, cysteine 421–cysteine 436, cysteine 438–cysteine 447, cysteine 454–cysteine 464, cysteine 458–cysteine 473, cysteine 475–cysteine 484, cysteine 491–cysteine 502, cysteine 496–cysteine 511, cysteine 513–cysteine 522, cysteine 529–cysteine 540, cysteine 534–cysteine 549, cysteine 551–cysteine 560, cysteine 578–cysteine 605, cysteine 599–cysteine 615, cysteine 617–cysteine 626, cysteine 633–cysteine 644, cysteine 638–cysteine 653, cysteine 655–cysteine 664, cysteine 671–cysteine 682, cysteine 676–cysteine 691, cysteine 693–cysteine 702, cysteine 709–cysteine 720, cysteine 714–cysteine 729, and cysteine 731–cysteine 740. The region spanning 230-263 (NRAICRQGCSPKHGSCKLPGDCRCQYGWQGLYCD) is the EGF-like 1 domain. One can recognise an EGF-like 2; atypical domain in the interval 264–294 (KCIPHPGCVHGICNEPWQCLCETNWGGQLCD). EGF-like domains lie at 296–334 (DLNY…PNCE) and 336–372 (AEHA…PTCS). In terms of domain architecture, EGF-like 5; calcium-binding spans 374 to 410 (NIDDCSPNNCSHGGTCQDLVNGFKCVCPPQWTGKTCQ). The N-linked (GlcNAc...) asparagine glycan is linked to asparagine 382. One can recognise an EGF-like 6; calcium-binding domain in the interval 412–448 (DANECEAKPCVNAKSCKNLIASYYCDCLPGWMGQNCD). In terms of domain architecture, EGF-like 7; calcium-binding spans 450–485 (NINDCLGQCQNDASCRDLVNGYRCICPPGYAGDHCE). The EGF-like 8; calcium-binding domain occupies 487-523 (DIDECASNPCLNGGHCQNEINRFQCLCPTGFSGNLCQ). EGF-like domains follow at residues 525 to 561 (DIDY…KNCS) and 586 to 627 (DTPE…TYCH). Asparagine 559 is a glycosylation site (N-linked (GlcNAc...) asparagine). Residues 629-665 (NINDCESNPCRNGGTCIDGVNSYKCICSDGWEGAYCE) form the EGF-like 11; calcium-binding domain. Positions 667-703 (NINDCSQNPCHNGGTCRDLVNDFYCDCKNGWKGKTCH) constitute an EGF-like 12; calcium-binding domain. 2 consecutive EGF-like domains span residues 705–741 (RDSQ…TTCN) and 744–780 (RNSS…PICA). Asparagine 745 carries N-linked (GlcNAc...) asparagine glycosylation. 9 disulfides stabilise this stretch: cysteine 748-cysteine 759, cysteine 753-cysteine 768, cysteine 770-cysteine 779, cysteine 786-cysteine 797, cysteine 791-cysteine 806, cysteine 808-cysteine 817, cysteine 824-cysteine 835, cysteine 829-cysteine 844, and cysteine 846-cysteine 855. The EGF-like 15; calcium-binding domain occupies 782 to 818 (NTNDCSPHPCYNSGTCVDGDNWYRCECAPGFAGPDCR). The EGF-like 16; calcium-binding domain occupies 820–856 (NINECQSSPCAFGATCVDEINGYRCVCPPGHSGAKCQ). Residues asparagine 960, asparagine 991, asparagine 1045, and asparagine 1064 are each glycosylated (N-linked (GlcNAc...) asparagine). A helical membrane pass occupies residues 1068-1093 (FLVPLLSSVLTVAWICCLVTAFYWCL). Over 1094-1218 (RKRRKPGSHT…QSLNRMEYIV (125 aa)) the chain is Cytoplasmic. Residues 1152–1218 (HNSEVEEDDM…QSLNRMEYIV (67 aa)) form a disordered region. Residues 1189–1199 (TPTKHPNWTNK) are compositionally biased toward polar residues.

Interacts with NOTCH2 and NOTCH3. Interacts with NOTCH1 (in the presence of calcium ions). Widely expressed in adult and fetal tissues. In cervix epithelium expressed in undifferentiated subcolumnar reserve cells and squamous metaplasia. Expression is up-regulated in cervical squamous cell carcinoma. Expressed in bone marrow cell line HS-27a which supports the long-term maintenance of immature progenitor cells.

The protein resides in the membrane. Its subcellular location is the cell membrane. In terms of biological role, ligand for multiple Notch receptors and involved in the mediation of Notch signaling. May be involved in cell-fate decisions during hematopoiesis. Seems to be involved in early and late stages of mammalian cardiovascular development. Inhibits myoblast differentiation. Enhances fibroblast growth factor-induced angiogenesis (in vitro). This Homo sapiens (Human) protein is Protein jagged-1 (JAG1).